The chain runs to 62 residues: MARYRRHSRSRSRSRYRRRRRRRSRHRNRRRTYRRSRRHSRRRRGRRRGYSRRRYSRRGRRR.

The disordered stretch occupies residues Met1–Arg62.

This sequence belongs to the protamine P1 family. As to expression, testis.

The protein resides in the nucleus. It localises to the chromosome. Functionally, protamines substitute for histones in the chromatin of sperm during the haploid phase of spermatogenesis. They compact sperm DNA into a highly condensed, stable and inactive complex. This Pseudantechinus bilarni (Sandstone dibbler) protein is Sperm protamine P1 (PRM1).